Consider the following 89-residue polypeptide: MSVADIKKSEIVAQFQRAQGDTGSPEVQVALLTARINELTGHFKEHMKDHHSRRGLLRMVSRRRKLLDYLKGRNPDSYRALIEKLGLRK.

The protein belongs to the universal ribosomal protein uS15 family. Part of the 30S ribosomal subunit. Forms a bridge to the 50S subunit in the 70S ribosome, contacting the 23S rRNA.

One of the primary rRNA binding proteins, it binds directly to 16S rRNA where it helps nucleate assembly of the platform of the 30S subunit by binding and bridging several RNA helices of the 16S rRNA. In terms of biological role, forms an intersubunit bridge (bridge B4) with the 23S rRNA of the 50S subunit in the ribosome. The sequence is that of Small ribosomal subunit protein uS15 from Bordetella parapertussis (strain 12822 / ATCC BAA-587 / NCTC 13253).